The following is a 428-amino-acid chain: Phosphoglucosamine mutase (428 aa).

The Phosphoserine intermediate role is filled by Ser96. Residues Ser96, Asp229, Asp231, and Asp233 each coordinate Mg(2+). Ser96 is modified (phosphoserine).

Belongs to the phosphohexose mutase family. The cofactor is Mg(2+). Post-translationally, activated by phosphorylation.

It catalyses the reaction alpha-D-glucosamine 1-phosphate = D-glucosamine 6-phosphate. Its function is as follows. Catalyzes the conversion of glucosamine-6-phosphate to glucosamine-1-phosphate. The chain is Phosphoglucosamine mutase from Thermotoga neapolitana (strain ATCC 49049 / DSM 4359 / NBRC 107923 / NS-E).